Consider the following 93-residue polypeptide: Protein S100-A8 (93 aa).

EF-hand domains follow at residues 12 to 47 (IIDVYHKYSLIKGNFHAVYRDDLKKLLETECPQYIR) and 46 to 81 (IRKKGADVWFKELDINTDGAVNFQEFLILVIKMGVA). Residues His17 and His27 each coordinate Zn(2+). Asp33 provides a ligand contact to Ca(2+). Cys42 is subject to S-nitrosocysteine. Ca(2+) is bound by residues Asp59, Asn61, Asp63, and Glu70. Zn(2+) contacts are provided by His83 and His87.

This sequence belongs to the S-100 family. In terms of assembly, homodimer. Preferentially exists as a heterodimer or heterotetramer with S100A9 known as calprotectin (S100A8/A9). S100A8 interacts with AGER, ATP2A2 and with the heterodimeric complex formed by TLR4 and LY96. Interacts with GAPDH. Calprotectin (S100A8/9) interacts with CEACAM3 and tubulin filaments in a calcium-dependent manner. Heterotetrameric calprotectin (S100A8/A9) interacts with ANXA6 and associates with tubulin filaments in activated monocytes. S100A8 and calprotectin (S100A8/9) interact with NCF2/P67PHOX, RAC1 and RAC2. Calprotectin (S100A8/9) interacts with CYBA and CYBB. Calprotectin (S100A8/9) interacts with NOS2 to form the iNOS-S100A8/A9 transnitrosylase complex; induced by LDL(ox). Calprotectin (S100A8/9) interacts with CD69. Calprotectin (S100A8/9) is predominantly expressed in myeloid cells. Except for inflammatory conditions, the expression is restricted to a specific stage of myeloid differentiation since both proteins are expressed in circulating neutrophils and monocytes but are absent in normal tissue macrophages and lymphocytes. Under chronic inflammatory conditions, such as psoriasis and malignant disorders, also expressed in the epidermis. Found in high concentrations at local sites of inflammation or in the serum of patients with inflammatory diseases such as rheumatoid, cystic fibrosis, inflammatory bowel disease, Crohn's disease, giant cell arteritis, cystic fibrosis, Sjogren's syndrome, systemic lupus erythematosus, and progressive systemic sclerosis. Involved in the formation and deposition of amyloids in the aging prostate known as corpora amylacea inclusions. Strongly up-regulated in many tumors, including gastric, esophageal, colon, pancreatic, bladder, ovarian, thyroid, breast and skin cancers.

The protein resides in the secreted. The protein localises to the cytoplasm. It localises to the cytoskeleton. It is found in the cell membrane. Its activity is regulated as follows. Calprotectin (S100A8/A9) activity on TLR4 signaling is inhibited by paquinimod. Functionally, S100A8 is a calcium- and zinc-binding protein which plays a prominent role in the regulation of inflammatory processes and immune response. It can induce neutrophil chemotaxis and adhesion. Predominantly found as calprotectin (S100A8/A9) which has a wide plethora of intra- and extracellular functions. The intracellular functions include: facilitating leukocyte arachidonic acid trafficking and metabolism, modulation of the tubulin-dependent cytoskeleton during migration of phagocytes and activation of the neutrophilic NADPH-oxidase. Also participates in regulatory T-cell differentiation together with CD69. Activates NADPH-oxidase by facilitating the enzyme complex assembly at the cell membrane, transferring arachidonic acid, an essential cofactor, to the enzyme complex and S100A8 contributes to the enzyme assembly by directly binding to NCF2/P67PHOX. The extracellular functions involve pro-inflammatory, antimicrobial, oxidant-scavenging and apoptosis-inducing activities. Its pro-inflammatory activity includes recruitment of leukocytes, promotion of cytokine and chemokine production, and regulation of leukocyte adhesion and migration. Acts as an alarmin or a danger associated molecular pattern (DAMP) molecule and stimulates innate immune cells via binding to pattern recognition receptors such as Toll-like receptor 4 (TLR4) and receptor for advanced glycation endproducts (AGER). Binding to TLR4 and AGER activates the MAP-kinase and NF-kappa-B signaling pathways resulting in the amplification of the pro-inflammatory cascade. Has antimicrobial activity towards bacteria and fungi and exerts its antimicrobial activity probably via chelation of Zn(2+) which is essential for microbial growth. Can induce cell death via autophagy and apoptosis and this occurs through the cross-talk of mitochondria and lysosomes via reactive oxygen species (ROS) and the process involves BNIP3. Can regulate neutrophil number and apoptosis by an anti-apoptotic effect; regulates cell survival via ITGAM/ITGB and TLR4 and a signaling mechanism involving MEK-ERK. Its role as an oxidant scavenger has a protective role in preventing exaggerated tissue damage by scavenging oxidants. Can act as a potent amplifier of inflammation in autoimmunity as well as in cancer development and tumor spread. The iNOS-S100A8/A9 transnitrosylase complex directs selective inflammatory stimulus-dependent S-nitrosylation of GAPDH and probably multiple targets such as ANXA5, EZR, MSN and VIM by recognizing a [IL]-x-C-x-x-[DE] motif; S100A8 seems to contribute to S-nitrosylation site selectivity. In terms of biological role, (Microbial infection) Upon infection by human coronavirus SARS-CoV-2, may induce expansion of aberrant immature neutrophils in a TLR4-dependent manner. This chain is Protein S100-A8, found in Homo sapiens (Human).